The primary structure comprises 224 residues: Protein YiiM (224 aa).

Positions 26-163 (IQVDGELMLT…VSADAPLELV (138 aa)) constitute an MOSC domain.

In terms of assembly, monomer.

This is Protein YiiM (yiiM) from Escherichia coli (strain K12).